A 1033-amino-acid polypeptide reads, in one-letter code: NACHT, LRR and PYD domains-containing protein 3 (1033 aa).

The region spanning 1–91 (MTSVRCKLAQ…WEKAKKDQPE (91 aa)) is the Pyrin domain. A Phosphoserine modification is found at Ser-3. Cys-6 and Cys-104 are disulfide-bonded. The residue at position 11 (Tyr-11) is a Phosphotyrosine. Cys-126 carries S-palmitoyl cysteine lipidation. The segment at 127-130 (KKKK) is required for binding to phosphatidylinositol 4-phosphate (PtdIns4P). Tyr-132, Tyr-136, and Tyr-145 each carry phosphotyrosine; by BTK. Residues 136 to 206 (YRRHVRSRFY…SSLKLELLFE (71 aa)) form the FISNA domain. Phosphoserine is present on Ser-157. At Tyr-164 the chain carries Phosphotyrosine; by BTK. Residue Thr-165 participates in ATP binding. Residue Ser-194 is modified to Phosphoserine; by MAPK8. Ser-197 is subject to Phosphoserine. The region spanning 216–532 (HTVVFQGAAG…EFFAAMYYLL (317 aa)) is the NACHT domain. 222–230 (GAAGIGKTI) is an ATP binding site. Ser-261 carries the post-translational modification Phosphoserine. A Phosphoserine; by PKD/PRKD1 modification is found at Ser-291. Lys-320 participates in a covalent cross-link: Glycyl lysine isopeptide (Lys-Gly) (interchain with G-Cter in ubiquitin). Position 330 is a phosphoserine (Ser-330). A KFERQ-like motif 1 motif is present at residues 351-355 (LEKLQ). A Glycyl lysine isopeptide (Lys-Gly) (interchain with G-Cter in ubiquitin) cross-link involves residue Lys-426. ATP is bound at residue His-518. The KFERQ-like motif 2 signature appears at 601–605 (QVRLE). A Glycyl lysine isopeptide (Lys-Gly) (interchain with G-Cter in ubiquitin) cross-link involves residue Lys-687. Ser-725 and Ser-732 each carry phosphoserine. LRR repeat units lie at residues 739 to 759 (SLTE…RVLC), 768 to 789 (NIQR…DISS), 796 to 816 (KLVE…RLLC), 825 to 846 (NLQK…DLAL), and 853 to 873 (SLTR…QVLC). A KFERQ-like motif 3 motif is present at residues 795–799 (QKLVE). Position 803 is a phosphoserine; by CSNK1A1 (Ser-803). Residues Cys-834, Cys-835, and Cys-841 are each lipidated (S-palmitoyl cysteine). Tyr-858 is subject to Phosphotyrosine. Lys-875 participates in a covalent cross-link: Glycyl lysine isopeptide (Lys-Gly) (interchain with G-Cter in ubiquitin). 4 LRR repeats span residues 882–903 (NLQK…ALTS), 910–930 (NFTH…RLLC), 939–960 (KLQM…NLST), and 967–988 (SLRK…TLCE). The S-palmitoyl cysteine moiety is linked to residue Cys-955. Lys-970 participates in a covalent cross-link: Glycyl lysine isopeptide (Lys-Gly) (interchain with G-Cter in ubiquitin). The KFERQ-like motif 4 motif lies at 988 to 992 (EVLKQ). Ser-1032 carries the phosphoserine modification.

Belongs to the NLRP family. Sensor component of NLRP3 inflammasomes; inflammasomes are supramolecular complexes that assemble in the cytosol in response to pathogens and other damage-associated signals and play critical roles in innate immunity and inflammation. The core of NLRP3 inflammasomes consists of a signal sensor component (NLRP3), an adapter (PYCARD/ASC), which recruits an effector pro-inflammatory caspase (CASP1 and, possibly, CASP4 and CASP5). Homodecamer; inactive NLRP3 forms homodecameric double-ring cages that hide pyrin domains within NACHT-LRR rings to avoid premature activation. Interacts (via pyrin domain) with PYCARD/ASC (via pyrin domain); interaction is direct. Interacts (via LRR repeat domain) with NEK7 (via N-terminus); the interaction is required for the formation of the complex NLRP3:PYCARD, oligomerization of PYCARD/ASC and activation of CASP1. Interacts (via LRR repeat domain) with NR4A1/Nur77 (via N-terminus); the interaction is direct, requires activation of NR4A1 by its ligands NBRE-containing dsDNA and lipopolysaccharide, and stimulates the association of NLRP3 with NEK7 for non-canonical NLRP3 inflammasome activation. Interacts with CARD8; leading to inhibit formation of the NLRP3 inflammasome. Interacts with MEFV; this interaction targets NLRP3 to degradation by autophagy, hence preventing excessive IL1B- and IL18-mediated inflammation. Interacts with EIF2AK2/PKR; this interaction requires EIF2AK2 activity, is accompanied by EIF2AK2 autophosphorylation and promotes inflammasome assembly in response to specific stimuli. Interacts with GBP5 (via DAPIN domain); this interaction promotes inflammasome assembly in response to microbial and soluble, but not crystalline, agents. Interacts with PML (isoform PML-1) (via the leucine-rich repeat (LRR) domain); PML-mediated increase in NLRP3 inflammasome activation does not depend upon this interaction. Interacts (via NACHT domain) with DHX33 (via DEAH box); NLRP3 activation in presence of cytosolic dsRNA is mediated by DHX33. Interacts (via NACHT and LRR domains) with ARRB2; this interaction is direct and inducible by polyunsaturated fatty acids (PUFAs). Interacts (via NACHT domain) with DDX3X under both LPS-primed and inflammasome-activating conditions. Interacts with IRF4 (via the LRR domain); this interaction is direct and is required for optimal IRF4 binding to IL4 promoter and efficient IL4 transactivation during differentiation of Th2 helper T-cells. Interacts with MAVS; promoting localization to mitochondria and activation of the NLRP3 inflammasome. Interacts with MARK4; promoting localization of NLRP3 to the microtubule organizing center (MTOC). Interacts with TRIM50; this interaction also promotes NLRP3 oligomerization and subsequent inflammasome activation. Interacts with IRGM; preventing NLRP3 inflammasome assembly and promoting NLRP3 degradation. Interacts (via KFERQ-like motifs) with HSPA8/HSC70; promoting NLRP3 degradation by the chaperone-mediated autophagy pathway. Interacts (via NACHT and LLR domains) with ABHD8; this interaction is enhanced in the presence of NLRP3 inflammasome inducers, such as ATP, nigericin, silica, or alum. Interaction with ABHD8 leads the recruitment of ZDHHC12, hence facilitating NLRP3 palmitoylation and degradation by the chaperone-mediated autophagy pathway (CMA), therefore attenuating NLRP3 inflammasome activation. Phosphorylation at Ser-194 by MAPK8/JNK1 increases inflammasome activation by promoting deubiquitination by BRCC3 and NLRP3 homooligomerization. Phosphorylation at Ser-803 by CSNK1A1 prevents inflammasome activation by preventing NEK7 recruitment. Phosphorylation at Ser-3 in the pyrin domain inhibits homomultimerization of NLRP3 and activation of the NLRP3 inflammasome: dephosphorylation by protein phosphatase 2A (PP2A) promotes assembly of the NLRP3 inflammasome. Phosphorylation at Ser-291 by PKD/PRKD1 promotes NLRP3 inflammasome assembly. Phosphorylation by ERK1/MAPK3 promotes NLRP3 inflammasome assembly. Phosphorylation by BTK (at Tyr-132, Tyr-136, Tyr-145 and Tyr-164) in the region that mediates binding to phosphatidylinositol phosphate, promotes relocalization of NLRP3 and assembly of the NLRP3 inflammasome. Phosphorylation at Tyr-858 inhibits NLRP3 inflammasome assembly: dephosphorylation by PTPN22 promotes inflammasome activation Phosphorylated by LATS1 and LATS2 at Ser-261 following palmitoylation by ZDHHC1, promoting its relocalization to the microtubule organizing center (MTOC), where NLRP3 is activated by NEK7, leading to inflammasome assembly and activation. Post-translationally, ubiquitinated; undergoes both 'Lys-48'- and 'Lys-63'-linked polyubiquitination. Ubiquitination does not lead to degradation, but inhibits inflammasome activation. Deubiquitination is catalyzed by BRCC3 and associated with NLRP3 activation and inflammasome assembly. This process can be induced by the activation of Toll-like receptors (by LPS), through a non-transcriptional pathway dependent on the mitochondrial production of reactive oxygen species, and by ATP. Ubiquitinated by TRIM31 via 'Lys-48'-linked ubiquitination, leading to its degradation by the proteasome. Ubiquitinated at Lys-687 by the SCF(FBXL2) complex, leading to its degradation by the proteasome. Ubiquitinated by TRIM35 via 'lys-48' and 'Lys-63'-linked ubiquitination leading to inhibition of NLRP3 inflammasome activation. Undergoes 'Lys-27'-linked polyubiquitination by MARCHF5, leading to NLRP3-NEK7 complex formation and NLRP3 oligomerization. In terms of processing, the disulfide bond in the pyrin domain might play a role in reactive oxygen species-mediated activation. Palmitoylation by ZDHHC12 promotes NLRP3 degradation by the chaperone-mediated autophagy pathway (CMA) and therefore limits NLRP3 inflammasome activation. Interaction with ZDHHC12, and hence NLRP3 palmitoylation, is enhanced by ABHD8. Following palmitoylation, HSPA8/HSC70 recognizes and binds the KFERQ-like motifs on NLRP3 and promotes NLRP3 recruitment to lysosomes, where it is degraded via the chaperone-mediated autophagy pathway in a LAMP2-dependent process. Palmitoylation at Cys-834 and Cys-835 by ZDHHC5 enhances its binding to NEK7 leading to inflammasome assembly and activation. Palmitoylation at Cys-126 and Cys-955 by ZDHHC1 facilitates phosphorylation at Ser-261 by LATS1 and LATS2, promoting its relocalization to the microtubule organizing center (MTOC), where NLRP3 is activated by NEK7, leading to inflammasome assembly and activation. Depalmitoylated by ABHD17A. Post-translationally, degraded via selective autophagy following interaction with Irgm1. Irgm1 promotes NLRP3 recruitment to autophagosome membranes, promoting its SQSTM1/p62-dependent autophagy-dependent degradation. In terms of tissue distribution, expressed with high levels in peripheral blood leukocytes, including Th2 lymphocytes and macrophages. Expressed at low levels in resting osteoblasts (at protein level).

Its subcellular location is the cytoplasm. It localises to the cytosol. The protein localises to the inflammasome. The protein resides in the cytoskeleton. It is found in the microtubule organizing center. Its subcellular location is the golgi apparatus membrane. It localises to the endoplasmic reticulum. The protein localises to the mitochondrion. The protein resides in the secreted. It is found in the nucleus. The catalysed reaction is ATP + H2O = ADP + phosphate + H(+). With respect to regulation, under resting conditions, NLRP3 binds ADP and is autoinhibited. Inactive NLRP3 forms homodecameric double-ring cages that hide pyrin domains within NACHT-LRR rings to avoid premature activation. NLRP3 activation stimuli include extracellular ATP, nigericin, reactive oxygen species, crystals of monosodium urate or cholesterol, amyloid-beta fibers, environmental or industrial particles and nanoparticles, such as asbestos, silica, aluminum salts, cytosolic dsRNA, etc. Almost all stimuli trigger intracellular K(+) efflux. These stimuli lead to membrane perturbations that induce activation of NLRP3. Upon activation, NLRP3 is transported to microtubule organizing center (MTOC), where it is unlocked by NEK7, leading to its relocalization to dispersed trans-Golgi network (dTGN) vesicle membranes and recruitment of PYCARD/ASC for the formation of an active inflammasome complex. NEK7-activated NLRP3 forms a disk-shaped inflammasome. NLRP3 and PYCARD/ASC interact via their respective pyrin domains; interaction initiates speck formation (nucleation) which greatly enhances further addition of soluble PYCARD/ASC molecules to the speck in a prion-like polymerization process. Clustered PYCARD/ASC nucleates the formation of CASP1 filaments through the interaction of their respective CARD domains, acting as a platform for CASP1 polymerization and activation. Active CASP1 then processes IL1B and IL18 precursors, leading to the release of mature cytokines in the extracellular milieu and inflammatory response. NLRP3 inflammasome assembly is inhibited by IRGM, which impedes NLRP3 oligomerization. NLRP3 inflammasome is inhibited by cyclic AMP (cAMP), which directly binds NLRP3; inhibition is relieved by calcium-sensing receptor CASR, which inhibits production of cAMP. Specifically inhibited by sulfonylurea MCC950 (also named CP-456,773, CRID3), a potent and specific small-molecule inhibitor of the NLRP3 inflammasome that acts by preventing ATP hydrolysis. Functionally, sensor component of the NLRP3 inflammasome, which mediates inflammasome activation in response to defects in membrane integrity, leading to secretion of inflammatory cytokines IL1B and IL18 and pyroptosis. In response to pathogens and other damage-associated signals that affect the integrity of membranes, initiates the formation of the inflammasome polymeric complex composed of NLRP3, CASP1 and PYCARD/ASC. Recruitment of pro-caspase-1 (proCASP1) to the NLRP3 inflammasome promotes caspase-1 (CASP1) activation, which subsequently cleaves and activates inflammatory cytokines IL1B and IL18 and gasdermin-D (GSDMD), promoting cytokine secretion and pyroptosis. Activation of NLRP3 inflammasome is also required for HMGB1 secretion; stimulating inflammatory responses. Under resting conditions, ADP-bound NLRP3 is autoinhibited. NLRP3 activation stimuli include extracellular ATP, nigericin, reactive oxygen species, crystals of monosodium urate or cholesterol, amyloid-beta fibers, environmental or industrial particles and nanoparticles, such as asbestos, silica, aluminum salts, cytosolic dsRNA, etc. Almost all stimuli trigger intracellular K(+) efflux. These stimuli lead to membrane perturbation and activation of NLRP3. Upon activation, NLRP3 is transported to microtubule organizing center (MTOC), where it is unlocked by NEK7, leading to its relocalization to dispersed trans-Golgi network (dTGN) vesicle membranes and formation of an active inflammasome complex. Associates with dTGN vesicle membranes by binding to phosphatidylinositol 4-phosphate (PtdIns4P). Shows ATPase activity. In terms of biological role, independently of inflammasome activation, regulates the differentiation of T helper 2 (Th2) cells and has a role in Th2 cell-dependent asthma and tumor growth. During Th2 differentiation, required for optimal IRF4 binding to IL4 promoter and for IRF4-dependent IL4 transcription. Binds to the consensus DNA sequence 5'-GRRGGNRGAG-3'. May also participate in the transcription of IL5, IL13, GATA3, CCR3, CCR4 and MAF. This Mus musculus (Mouse) protein is NACHT, LRR and PYD domains-containing protein 3.